The following is a 102-amino-acid chain: Small ribosomal subunit protein bS18 (102 aa).

This sequence belongs to the bacterial ribosomal protein bS18 family. As to quaternary structure, part of the 30S ribosomal subunit. Forms a tight heterodimer with protein bS6.

Binds as a heterodimer with protein bS6 to the central domain of the 16S rRNA, where it helps stabilize the platform of the 30S subunit. The protein is Small ribosomal subunit protein bS18 of Orientia tsutsugamushi (strain Boryong) (Rickettsia tsutsugamushi).